Here is a 151-residue protein sequence, read N- to C-terminus: Putative esterase VNG_1336C (151 aa).

It belongs to the thioesterase PaaI family.

The sequence is that of Putative esterase VNG_1336C from Halobacterium salinarum (strain ATCC 700922 / JCM 11081 / NRC-1) (Halobacterium halobium).